A 217-amino-acid chain; its full sequence is Polyadenylate-binding protein 3 (217 aa).

The segment at 1–28 is disordered; sequence MEEEEHEVYGGEIPEVGDTDVPDPDIDM. Residues 15 to 28 are compositionally biased toward acidic residues; the sequence is EVGDTDVPDPDIDM. The stretch at 30–71 forms a coiled coil; sequence AADEDAVTELAEMKRRLKEMEEEAAALREMQAKVEKEMGATQ. The segment at 75-216 is necessary for homooligomerization; it reads SMAANQEGKE…FRRPMRYMPY (142 aa). One can recognise an RRM domain in the interval 89-165; it reads RSVYVGNVDY…RQLKVSPKRT (77 aa). Residues 162 to 169 carry the Nuclear localization signal motif; it reads PKRTNVPG.

As to quaternary structure, monomer and homooligomer. Binds RNA as a monomer and oligomerizes when bound to poly(A). Forms a complex with cleavage and polyadenylation specificity factor (CPSF) subunits PAPS4, PABN1, PABN2, CSTF50 and FIPS5. Interacts with CSP3.

The protein localises to the nucleus speckle. The protein resides in the cytoplasm. In terms of biological role, involved in the 3'-end formation of mRNA precursors (pre-mRNA) by the addition of a poly(A) tail of 200-250 nt to the upstream cleavage product. Stimulates poly(A) polymerase (PAPOLA) conferring processivity on the poly(A) tail elongation reaction and also controls the poly(A) tail length. Increases the affinity of poly(A) polymerase for RNA. Binds to poly(A) and to poly(G) with high affinity. May protect the poly(A) tail from degradation. In Arabidopsis thaliana (Mouse-ear cress), this protein is Polyadenylate-binding protein 3.